The chain runs to 240 residues: Transcriptional regulatory protein BaeR (240 aa).

The region spanning 12-125 (RILIVEDEPK…EVVARVKTIL (114 aa)) is the Response regulatory domain. Residue aspartate 61 is modified to 4-aspartylphosphate. Residues 131–234 (QRELQQQDAE…VYGVGYRWEA (104 aa)) constitute a DNA-binding region (ompR/PhoB-type).

Post-translationally, phosphorylated by BaeS.

It localises to the cytoplasm. Its function is as follows. Member of the two-component regulatory system BaeS/BaeR. Activates the mdtABCD operon. The polypeptide is Transcriptional regulatory protein BaeR (baeR) (Escherichia coli O6:H1 (strain CFT073 / ATCC 700928 / UPEC)).